A 171-amino-acid polypeptide reads, in one-letter code: Myosin regulatory light polypeptide 9 (171 aa).

The span at 1–15 shows a compositional bias: basic residues; the sequence is MSSKRAKAKTTKKRP. The interval 1 to 21 is disordered; it reads MSSKRAKAKTTKKRPQSATSN. An N-acetylserine modification is found at serine 2. Threonine 19 carries the phosphothreonine; by MLCK, CIT and ROCK2 modification. Position 20 is a phosphoserine; by CDC42BP, CIT, MLCK, PAK1, ROCK1, ROCK2, DAPK1, DAPK2 and ZIPK/DAPK3 (serine 20). EF-hand domains lie at 29–64 and 98–133; these read SQIQ…LGKN and DPED…MGDR. The Ca(2+) site is built by aspartate 42, asparagine 44, aspartate 46, and aspartate 53.

Myosin is a hexamer of 2 heavy chains and 4 light chains: interacts with myosin heavy chain MYO19. Interacts with LUZP1; the interaction results in inhibition of phosphorylation of MYL9 by DAPK3. Post-translationally, phosphorylation increases the actin-activated myosin ATPase activity and thereby regulates the contractile activity. It is required to generate the driving force in the migration of the cells but not necessary for localization of myosin-2 at the leading edge. Phosphorylation is required for myotube formation. Phosphorylated by DAPK3; DAPK3-mediated phosphorylation is inhibited by LUZP1. Smooth muscle tissues and in some, but not all, nonmuscle cells.

The protein localises to the cytoplasm. It is found in the cytoskeleton. Its subcellular location is the cell cortex. Functionally, myosin regulatory subunit that plays an important role in regulation of both smooth muscle and nonmuscle cell contractile activity via its phosphorylation. Implicated in cytokinesis, receptor capping, and cell locomotion. In myoblasts, may regulate PIEZO1-dependent cortical actomyosin assembly involved in myotube formation. The polypeptide is Myosin regulatory light polypeptide 9 (Myl9) (Rattus norvegicus (Rat)).